The primary structure comprises 170 residues: Adenine phosphoribosyltransferase (170 aa).

The protein belongs to the purine/pyrimidine phosphoribosyltransferase family. In terms of assembly, homodimer.

The protein localises to the cytoplasm. The catalysed reaction is AMP + diphosphate = 5-phospho-alpha-D-ribose 1-diphosphate + adenine. Its pathway is purine metabolism; AMP biosynthesis via salvage pathway; AMP from adenine: step 1/1. In terms of biological role, catalyzes a salvage reaction resulting in the formation of AMP, that is energically less costly than de novo synthesis. This chain is Adenine phosphoribosyltransferase, found in Streptococcus pneumoniae (strain Taiwan19F-14).